The primary structure comprises 219 residues: Ribose-5-phosphate isomerase A (219 aa).

Residues 28–31, 81–84, and 94–97 contribute to the substrate site; these read SGST, DGAD, and KGGG. Catalysis depends on E103, which acts as the Proton acceptor. A substrate-binding site is contributed by K121.

The protein belongs to the ribose 5-phosphate isomerase family. In terms of assembly, homodimer.

The catalysed reaction is aldehydo-D-ribose 5-phosphate = D-ribulose 5-phosphate. It functions in the pathway carbohydrate degradation; pentose phosphate pathway; D-ribose 5-phosphate from D-ribulose 5-phosphate (non-oxidative stage): step 1/1. In terms of biological role, catalyzes the reversible conversion of ribose-5-phosphate to ribulose 5-phosphate. The sequence is that of Ribose-5-phosphate isomerase A from Histophilus somni (strain 129Pt) (Haemophilus somnus).